A 139-amino-acid polypeptide reads, in one-letter code: Transcriptional regulator WhiB5 (139 aa).

The region spanning 4–77 (PCATDPELWF…AGIKLPGGQY (74 aa)) is the 4Fe-4S Wbl-type domain. Residues Cys5, Cys41, Cys45, and Cys53 each contribute to the [4Fe-4S] cluster site.

This sequence belongs to the WhiB family. [4Fe-4S] cluster serves as cofactor. Post-translationally, the Fe-S cluster can be nitrosylated by nitric oxide (NO). In terms of processing, upon Fe-S cluster removal intramolecular disulfide bonds are formed.

Its subcellular location is the cytoplasm. A transcription factor that is probably redox-responsive. Probably plays a role in immunomodulation and reactivation after chronic infection. Its induction results in transcription of a number of genes including sigM, and the genes for 2 type VII secretion systems ESX-2 and ESX-4. Seems to negatively regulate its own expression. The apo-form has been shown to act as a protein disulfide reductase. The apo- but not holo-form probably binds DNA. The protein is Transcriptional regulator WhiB5 (whiB5) of Mycobacterium tuberculosis (strain ATCC 25618 / H37Rv).